Here is a 196-residue protein sequence, read N- to C-terminus: Phosphoheptose isomerase (196 aa).

The 166-residue stretch at 31–196 (VARQFKAGNK…KAGLEAQIAV (166 aa)) folds into the SIS domain. A substrate-binding site is contributed by 46–48 (NGG). Residues H55 and E59 each coordinate Zn(2+). Residues E59, 88–89 (ND), 114–116 (STS), S119, and Q166 each bind substrate. Residues Q166 and H174 each contribute to the Zn(2+) site.

It belongs to the SIS family. GmhA subfamily. Zn(2+) serves as cofactor.

It is found in the cytoplasm. It catalyses the reaction 2 D-sedoheptulose 7-phosphate = D-glycero-alpha-D-manno-heptose 7-phosphate + D-glycero-beta-D-manno-heptose 7-phosphate. It functions in the pathway carbohydrate biosynthesis; D-glycero-D-manno-heptose 7-phosphate biosynthesis; D-glycero-alpha-D-manno-heptose 7-phosphate and D-glycero-beta-D-manno-heptose 7-phosphate from sedoheptulose 7-phosphate: step 1/1. In terms of biological role, catalyzes the isomerization of sedoheptulose 7-phosphate in D-glycero-D-manno-heptose 7-phosphate. This Crocosphaera subtropica (strain ATCC 51142 / BH68) (Cyanothece sp. (strain ATCC 51142)) protein is Phosphoheptose isomerase.